The chain runs to 313 residues: tRNA dimethylallyltransferase (313 aa).

An ATP-binding site is contributed by Gly11 to Thr18. Substrate is bound at residue Thr13 to Thr18. Interaction with substrate tRNA stretches follow at residues Asp36–Leu39, Gln160–Arg164, and Arg243–Arg248.

This sequence belongs to the IPP transferase family. In terms of assembly, monomer. It depends on Mg(2+) as a cofactor.

It catalyses the reaction adenosine(37) in tRNA + dimethylallyl diphosphate = N(6)-dimethylallyladenosine(37) in tRNA + diphosphate. Its function is as follows. Catalyzes the transfer of a dimethylallyl group onto the adenine at position 37 in tRNAs that read codons beginning with uridine, leading to the formation of N6-(dimethylallyl)adenosine (i(6)A). The protein is tRNA dimethylallyltransferase of Neisseria gonorrhoeae (strain ATCC 700825 / FA 1090).